We begin with the raw amino-acid sequence, 510 residues long: UDP-galactopyranose mutase (510 aa).

Residues T18, D38, L46, and G61 each contribute to the FAD site. The UDP-alpha-D-galactose site is built by G61 and G62. FAD is bound at residue H63. Residues H68, R91, and S93 each contribute to the NADH site. NADPH-binding residues include H68, R91, S93, and Y104. Residues Y104, Q107, M159, Y162, N163, W167, and R182 each coordinate UDP-alpha-D-galactose. Residue N203 participates in NADPH binding. N207 contacts UDP-alpha-D-galactose. Residue V242 coordinates FAD. Residues W315 and Y317 each coordinate NADPH. Y317, R327, and Y419 together coordinate UDP-alpha-D-galactose. R327 is an FAD binding site. Positions 419 and 447 each coordinate NADH. Positions 419 and 447 each coordinate NADPH. R447 provides a ligand contact to FAD. Y453 provides a ligand contact to UDP-alpha-D-galactose. 3 residues coordinate FAD: G456, N457, and Q458. UDP-alpha-D-galactose is bound at residue N457. Position 457 (N457) interacts with NADH. N457 contacts NADPH. H460 lines the NADPH pocket. S461 lines the FAD pocket.

This sequence belongs to the UDP-galactopyranose/dTDP-fucopyranose mutase family. Homotetramer. The cofactor is FAD.

It catalyses the reaction UDP-alpha-D-galactose = UDP-alpha-D-galactofuranose. Its function is as follows. UDP-galactopyranose mutase, key flavoenzyme of galactofuranose metabolism that catalyzes the 6-to-5 ring contraction of UDP-galactopyranose to UDP-galactofuranose, the donor used by various galacto-furanosyltransferases. Controls the biosynthesis of galactomannan and galactofuranose containing glycoconjugates. The flavin functions as nucleophile, forming a flavin-sugar adduct that facilitates galactose-ring opening and contraction. The binding of UDP-galactopyranose induces profound conformational changes in the enzyme and two loops on opposite sides of the active site move toward each other by over 10 Angstroms to cover the substrate and create a closed active site. The polypeptide is UDP-galactopyranose mutase (Aspergillus fumigatus (Neosartorya fumigata)).